Reading from the N-terminus, the 844-residue chain is Janus kinase and microtubule-interacting protein 3 (844 aa).

Residues 8-259 (SRAKGDKAET…LSQAKEAERH (252 aa)) adopt a coiled-coil conformation. Residues 249-290 (QLSQAKEAERHPGSPRRELPYASGAGDASDHSGSPEQQLDEK) form a disordered region. The span at 254-267 (KEAERHPGSPRREL) shows a compositional bias: basic and acidic residues. Over residues 270 to 282 (ASGAGDASDHSGS) the composition is skewed to low complexity. Residues 289–421 (EKDARRFQLK…DELSKTLETA (133 aa)) are a coiled coil. Residue Ser384 is modified to Phosphoserine. Residues 466-483 (SDGSSISYQTDRTDQTPC) show a composition bias toward polar residues. The interval 466 to 488 (SDGSSISYQTDRTDQTPCTPEDD) is disordered. 2 coiled-coil regions span residues 493-621 (MAKE…RERK) and 688-833 (EKWL…LFLF).

This sequence belongs to the JAKMIP family.

It is found in the golgi apparatus. In Mus musculus (Mouse), this protein is Janus kinase and microtubule-interacting protein 3 (Jakmip3).